Reading from the N-terminus, the 349-residue chain is Microbial Terpene synthase-like protein 1 (349 aa).

Mg(2+)-binding residues include Asp98, Asp102, Asn243, and Ser247. The DDXXD motif motif lies at 98 to 102 (DDILD).

Belongs to the terpene synthase family. Requires Mg(2+) as cofactor.

It functions in the pathway secondary metabolite biosynthesis; terpenoid biosynthesis. Its function is as follows. Sesquiterpene synthase converting farnesyl diphosphate to six sesquiterpenes, with beta-elemene, delta-cadinene and an unidentified oxygenated sesquiterpene as the major products. Has no diterpene synthase activity. This Selaginella moellendorffii (Spikemoss) protein is Microbial Terpene synthase-like protein 1.